The sequence spans 104 residues: Large ribosomal subunit protein uL24 (104 aa).

This sequence belongs to the universal ribosomal protein uL24 family. In terms of assembly, part of the 50S ribosomal subunit.

Its function is as follows. One of two assembly initiator proteins, it binds directly to the 5'-end of the 23S rRNA, where it nucleates assembly of the 50S subunit. In terms of biological role, one of the proteins that surrounds the polypeptide exit tunnel on the outside of the subunit. This chain is Large ribosomal subunit protein uL24, found in Shewanella piezotolerans (strain WP3 / JCM 13877).